Here is a 446-residue protein sequence, read N- to C-terminus: D(1A) dopamine receptor (446 aa).

The Extracellular segment spans residues 1–23 (MRTLNTSTMEGTGLVAERDFSFR). A glycan (N-linked (GlcNAc...) asparagine) is linked at N5. A helical transmembrane segment spans residues 24-49 (ILTACFLSLLILSTLLGNTLVCAAVI). Residues 50 to 60 (RFRHLRSKVTN) lie on the Cytoplasmic side of the membrane. Residues 61 to 87 (FFVISLAVSDLLVAVLVMPWKAVAEIA) form a helical membrane-spanning segment. Residues 88 to 96 (GFWPFGSFC) are Extracellular-facing. A disulfide bond links C96 and C186. Residues 97 to 119 (NIWVAFDIMCSTASILNLCVISV) form a helical membrane-spanning segment. Residues 120-138 (DRYWAISSPFRYERKMTPK) are Cytoplasmic-facing. Residues 139-163 (AAFILISVAWTLSVLISFIPVQLSW) traverse the membrane as a helical segment. Over 164–192 (HKAKPTGPSEGNATSLGKTINNCDSSLSR) the chain is Extracellular. A glycan (N-linked (GlcNAc...) asparagine) is linked at N175. A helical membrane pass occupies residues 193 to 218 (TYAISSSLISFYIPVAIMIVTYTRIY). Residues 219–272 (RIAQKQIRRISALERAAVHAKNCQTTTGNGNPMECSQPESSFKMSFKRETKVLK) lie on the Cytoplasmic side of the membrane. A helical membrane pass occupies residues 273–299 (TLSVIMGVFVCCWLPFFILNCMVPFCG). The Extracellular portion of the chain corresponds to 300 to 312 (SGETKPFCIDSIT). A helical transmembrane segment spans residues 313–337 (FDVFVWFGWANSSLNPIIYAFNADF). Over 338–446 (RKAFSTLLGC…PITQNGQHPT (109 aa)) the chain is Cytoplasmic. Residues C347 and C351 are each lipidated (S-palmitoyl cysteine).

Belongs to the G-protein coupled receptor 1 family. In terms of assembly, interacts with DNAJC14 via its C-terminus. Interacts with DRD2. Interacts with DORIP1.

It localises to the cell membrane. It is found in the endoplasmic reticulum membrane. Its subcellular location is the cell projection. The protein localises to the cilium membrane. The protein resides in the dendrite. It localises to the dendritic spine. In terms of biological role, dopamine receptor whose activity is mediated by G proteins which activate adenylyl cyclase. The chain is D(1A) dopamine receptor (DRD1) from Bos taurus (Bovine).